The following is a 109-amino-acid chain: Flagellar hook-basal body complex protein FliE 2 (109 aa).

The protein belongs to the FliE family.

It localises to the bacterial flagellum basal body. The polypeptide is Flagellar hook-basal body complex protein FliE 2 (fliE2) (Bradyrhizobium diazoefficiens (strain JCM 10833 / BCRC 13528 / IAM 13628 / NBRC 14792 / USDA 110)).